Consider the following 111-residue polypeptide: MAPSQKALLVLVLSMLLTASDSRARRIDCTRFVYAPICRGVAAKRGGDSLSVGASTELDDALTDPFLRSEEPREEDTEKKWRELSRLSRVLQILLSHPTGETEQLDRLLTL.

Positions 1–24 (MAPSQKALLVLVLSMLLTASDSRA) are cleaved as a signal peptide. An intrachain disulfide couples cysteine 29 to cysteine 38. Positions 44 to 111 (KRGGDSLSVG…TEQLDRLLTL (68 aa)) are excised as a propeptide.

Belongs to the elevenin family. Monomer. In terms of tissue distribution, expressed by the venom duct.

The protein resides in the secreted. May mimic the function of prey elevenin neuropeptide. In vivo, intracranial injection in mice induces hyperactivity. The sequence is that of Elevenin from Conus ebraeus (Hebrew cone).